A 1369-amino-acid chain; its full sequence is DNA-directed RNA polymerase subunit beta' (1369 aa).

Positions 1–26 are disordered; the sequence is MTSSSPKTRKSSTKSKAKRGSKSKKA. Basic residues predominate over residues 7-24; the sequence is KTRKSSTKSKAKRGSKSK. Zn(2+) contacts are provided by C253, C320, C327, and C330. Positions 1294 to 1369 are disordered; sequence TVDMPSSPVA…LQEEGLLSDE (76 aa). Residues 1342–1351 show a composition bias toward acidic residues; sequence DDELSAEDQM. Over residues 1357–1369 the composition is skewed to low complexity; sequence LEGLQEEGLLSDE.

This sequence belongs to the RNA polymerase beta' chain family. RpoC2 subfamily. As to quaternary structure, in cyanobacteria the RNAP catalytic core is composed of 2 alpha, 1 beta, 1 beta', 1 gamma and 1 omega subunit. When a sigma factor is associated with the core the holoenzyme is formed, which can initiate transcription. It depends on Zn(2+) as a cofactor.

It carries out the reaction RNA(n) + a ribonucleoside 5'-triphosphate = RNA(n+1) + diphosphate. In terms of biological role, DNA-dependent RNA polymerase catalyzes the transcription of DNA into RNA using the four ribonucleoside triphosphates as substrates. This chain is DNA-directed RNA polymerase subunit beta', found in Prochlorococcus marinus (strain NATL2A).